The sequence spans 384 residues: Spermidine/putrescine import ATP-binding protein PotA (384 aa).

One can recognise an ABC transporter domain in the interval 6 to 238 (IAFQNVSKVF…PINHFVATFI (233 aa)). 40-47 (GASGSGKS) provides a ligand contact to ATP.

The protein belongs to the ABC transporter superfamily. Spermidine/putrescine importer (TC 3.A.1.11.1) family. As to quaternary structure, the complex is composed of two ATP-binding proteins (PotA), two transmembrane proteins (PotB and PotC) and a solute-binding protein (PotD).

It localises to the cell membrane. The catalysed reaction is ATP + H2O + polyamine-[polyamine-binding protein]Side 1 = ADP + phosphate + polyamineSide 2 + [polyamine-binding protein]Side 1.. In terms of biological role, part of the ABC transporter complex PotABCD involved in spermidine/putrescine import. Responsible for energy coupling to the transport system. This chain is Spermidine/putrescine import ATP-binding protein PotA, found in Streptococcus thermophilus (strain ATCC BAA-491 / LMD-9).